Reading from the N-terminus, the 535-residue chain is Flavin-containing monooxygenase 1 (535 aa).

Ala2 carries the N-acetylalanine modification. Topologically, residues 2 to 513 (AKRVAIVGAG…TRIVQESSSP (512 aa)) are lumenal. FAD contacts are provided by residues 9-13 (GAGVS), Glu32, 40-41 (LW), and 61-62 (NS). NADP(+)-binding positions include 60-61 (SN) and 195-198 (SGTD). Residues 514–534 (FESLLKLFAVLALLVSVFLIF) traverse the membrane as a helical segment. Leu535 is a topological domain (cytoplasmic).

Belongs to the FMO family. It depends on FAD as a cofactor. As to expression, liver.

It localises to the endoplasmic reticulum membrane. It catalyses the reaction hypotaurine + NADPH + O2 + H(+) = taurine + NADP(+) + H2O. The catalysed reaction is hypotaurine + NADH + O2 + H(+) = taurine + NAD(+) + H2O. The enzyme catalyses trimethylamine + NADPH + O2 = trimethylamine N-oxide + NADP(+) + H2O. It carries out the reaction N,N-dimethylaniline + NADPH + O2 + H(+) = N,N-dimethylaniline N-oxide + NADP(+) + H2O. Functionally, broad spectrum monooxygenase that catalyzes the oxygenation of a wide variety of nitrogen- and sulfur-containing compounds including xenobiotics. Catalyzes the S-oxygenation of hypotaurine to produce taurine, an organic osmolyte involved in cell volume regulation as well as a variety of cytoprotective and developmental processes. In vitro, catalyzes the N-oxygenation of trimethylamine (TMA) to produce trimethylamine N-oxide (TMAO) and could therefore participate to the detoxification of this compound that is generated by the action of gut microbiota from dietary precursors such as choline, choline containing compounds, betaine or L-carnitine. The sequence is that of Flavin-containing monooxygenase 1 (FMO1) from Oryctolagus cuniculus (Rabbit).